A 196-amino-acid polypeptide reads, in one-letter code: Xanthine phosphoribosyltransferase (196 aa).

2 residues coordinate xanthine: leucine 20 and asparagine 27. 128-132 (ATGAA) contributes to the 5-phospho-alpha-D-ribose 1-diphosphate binding site. Lysine 156 is a xanthine binding site.

It belongs to the purine/pyrimidine phosphoribosyltransferase family. Xpt subfamily. As to quaternary structure, homodimer.

Its subcellular location is the cytoplasm. The enzyme catalyses XMP + diphosphate = xanthine + 5-phospho-alpha-D-ribose 1-diphosphate. It functions in the pathway purine metabolism; XMP biosynthesis via salvage pathway; XMP from xanthine: step 1/1. Its function is as follows. Converts the preformed base xanthine, a product of nucleic acid breakdown, to xanthosine 5'-monophosphate (XMP), so it can be reused for RNA or DNA synthesis. In Brevibacillus brevis (strain 47 / JCM 6285 / NBRC 100599), this protein is Xanthine phosphoribosyltransferase.